The primary structure comprises 709 residues: Cell adhesion molecule CEACAM3 (709 aa).

The N-terminal stretch at 1–34 is a signal peptide; that stretch reads MELSSVLPCKRCTPWRGLLLTASLLTCWLLPTTA. 5 Ig-like V-type domains span residues 35–142, 155–262, 275–382, 393–500, and 509–616; these read QVSI…HVYF, QLSI…QVDT, QLTV…QVNT, LLTI…SVHT, and QLVI…HIYK. N-linked (GlcNAc...) asparagine glycosylation is found at N73, N86, N103, N110, N133, N207, N224, N231, N327, N344, N351, N381, N462, N561, N578, and N585. Residues 631-695 form the Ig-like C2-type domain; sequence RVKSSVVLTC…YRCEVSNPVS (65 aa).

This sequence belongs to the immunoglobulin superfamily. CEA family. As to expression, expression detected only in placenta.

Possibly involved in cell adhesion. This Rattus norvegicus (Rat) protein is Cell adhesion molecule CEACAM3.